The sequence spans 38 residues: Photosystem II reaction center protein L (38 aa).

The chain crosses the membrane as a helical span at residues 17-37 (SLYWGLLLIFVLAILFSNYFF).

The protein belongs to the PsbL family. As to quaternary structure, PSII is composed of 1 copy each of membrane proteins PsbA, PsbB, PsbC, PsbD, PsbE, PsbF, PsbH, PsbI, PsbJ, PsbK, PsbL, PsbM, PsbT, PsbX, PsbY, PsbZ, Psb30/Ycf12, at least 3 peripheral proteins of the oxygen-evolving complex and a large number of cofactors. It forms dimeric complexes.

The protein localises to the plastid. Its subcellular location is the chloroplast thylakoid membrane. In terms of biological role, one of the components of the core complex of photosystem II (PSII). PSII is a light-driven water:plastoquinone oxidoreductase that uses light energy to abstract electrons from H(2)O, generating O(2) and a proton gradient subsequently used for ATP formation. It consists of a core antenna complex that captures photons, and an electron transfer chain that converts photonic excitation into a charge separation. This subunit is found at the monomer-monomer interface and is required for correct PSII assembly and/or dimerization. The protein is Photosystem II reaction center protein L of Aethionema cordifolium (Lebanon stonecress).